A 2226-amino-acid polypeptide reads, in one-letter code: Histone-lysine N-methyltransferase ash1 (2226 aa).

The disordered stretch occupies residues methionine 1–lysine 145. Residues isoleucine 32–arginine 52 are compositionally biased toward polar residues. Over residues alanine 99–leucine 111 the composition is skewed to basic residues. Serine 135, serine 136, and serine 138 each carry phosphoserine. Residues threonine 200 and threonine 201 each carry the phosphothreonine modification. The span at proline 260–lysine 269 shows a compositional bias: basic residues. Disordered regions lie at residues proline 260–serine 324, arginine 343–lysine 367, alanine 673–leucine 695, serine 711–proline 749, and lysine 811–proline 832. The segment at residues arginine 261–threonine 273 is a DNA-binding region (a.T hook 1). The span at serine 294–proline 306 shows a compositional bias: low complexity. Positions lysine 307–serine 324 are enriched in polar residues. The span at serine 711 to asparagine 727 shows a compositional bias: low complexity. Residues serine 740, serine 831, and serine 977 each carry the phosphoserine modification. Over residues serine 820–serine 831 the composition is skewed to low complexity. Disordered regions lie at residues glutamine 980–arginine 1026 and serine 1049–leucine 1230. The segment covering histidine 989–proline 999 has biased composition (acidic residues). 2 consecutive DNA-binding regions (a.T hook) follow at residues glycine 1065 to glutamine 1077 and alanine 1095 to leucine 1107. The segment covering glutamate 1108–glutamine 1117 has biased composition (pro residues). Residues alanine 1186 to proline 1200 show a composition bias toward basic and acidic residues. Polar residues predominate over residues glutamate 1205–glutamate 1219. Residues phenylalanine 1339–alanine 1387 enclose the AWS domain. Residues proline 1390–asparagine 1506 enclose the SET domain. Residues glutamate 1514–glycine 1530 form the Post-SET domain. 2 disordered regions span residues valine 1536 to isoleucine 1575 and arginine 1616 to serine 1648. A compositionally biased stretch (basic residues) spans glycine 1556 to glutamine 1568. 2 stretches are compositionally biased toward low complexity: residues aspartate 1619–alanine 1628 and arginine 1639–serine 1648. Residues lysine 1681 to serine 1789 form the Bromo domain. The interval proline 1808–leucine 1839 is disordered. The PHD-type zinc-finger motif lies at valine 1857 to arginine 1903. Positions lysine 1952 to lysine 2072 constitute a BAH domain. The segment at serine 2205–threonine 2226 is disordered. Residues threonine 2214–threonine 2226 show a composition bias toward low complexity.

This sequence belongs to the class V-like SAM-binding methyltransferase superfamily. Histone-lysine methyltransferase family. SET2 subfamily. Component of a large multiprotein complex distinct from complexes containing ash2 or brm. Interacts (via SET domain) with trx (via SET domain). Interacts with nej/cbp. Expressed throughout development but is present at higher levels during the embryonic and pupal stages than during the larval stages. During the larval stages it accumulates primarily in imaginal disks.

It is found in the nucleus. It localises to the chromosome. It catalyses the reaction L-lysyl(4)-[histone H3] + 3 S-adenosyl-L-methionine = N(6),N(6),N(6)-trimethyl-L-lysyl(4)-[histone H3] + 3 S-adenosyl-L-homocysteine + 3 H(+). Its function is as follows. Trithorax group (TrxG) protein that has histone methyltransferase activity. Specifically trimethylates 'Lys-4' of histone H3 (H3K4me3), a specific tag for epigenetic transcriptional activation. TrxG proteins are generally required to maintain the transcriptionally active state of homeotic genes throughout development. Does not act as a coactivator required for transcriptional activation, but specifically prevents inappropriate Polycomb Group (PcG) silencing of homeotic genes in cells in which they must stay transcriptionally active. The protein is Histone-lysine N-methyltransferase ash1 (ash1) of Drosophila melanogaster (Fruit fly).